Here is a 314-residue protein sequence, read N- to C-terminus: tRNA dimethylallyltransferase (314 aa).

ATP is bound at residue 13-20; sequence GPTASGKS. 15 to 20 is a binding site for substrate; the sequence is TASGKS. Interaction with substrate tRNA stretches follow at residues 38 to 41 and 161 to 165; these read DSMQ and QRIAR.

This sequence belongs to the IPP transferase family. As to quaternary structure, monomer. The cofactor is Mg(2+).

It carries out the reaction adenosine(37) in tRNA + dimethylallyl diphosphate = N(6)-dimethylallyladenosine(37) in tRNA + diphosphate. Functionally, catalyzes the transfer of a dimethylallyl group onto the adenine at position 37 in tRNAs that read codons beginning with uridine, leading to the formation of N6-(dimethylallyl)adenosine (i(6)A). The chain is tRNA dimethylallyltransferase from Parvibaculum lavamentivorans (strain DS-1 / DSM 13023 / NCIMB 13966).